The primary structure comprises 252 residues: MQIKRWFLNNSLRNYQYLLYDKSHAIVIDPLKSDIFAEFIAKNKLQLEAILITHKHGDHIAGVKKLLAIYPNAKVYAYTENDLFKPDIYVKDGSFINLGFTSFRVMYTPGHIDDHVCFLFEQERALFCGDTLFNAGVGGVQAESADINQLYDSLVKITKLDGDIKPYPAHDYWLGNLDFALSILADDSYFNYYRNQVAELAAEDKPIVNLAEEAKLNIFIRAMSDKALLKALPDYSLGREMFVKLRQLKNNF.

Zn(2+) contacts are provided by histidine 54, histidine 56, aspartate 58, histidine 59, histidine 111, aspartate 130, and histidine 170.

This sequence belongs to the metallo-beta-lactamase superfamily. Glyoxalase II family. In terms of assembly, monomer. Zn(2+) is required as a cofactor.

It catalyses the reaction an S-(2-hydroxyacyl)glutathione + H2O = a 2-hydroxy carboxylate + glutathione + H(+). Its pathway is secondary metabolite metabolism; methylglyoxal degradation; (R)-lactate from methylglyoxal: step 2/2. Its function is as follows. Thiolesterase that catalyzes the hydrolysis of S-D-lactoyl-glutathione to form glutathione and D-lactic acid. The polypeptide is Hydroxyacylglutathione hydrolase (Francisella tularensis subsp. novicida (strain U112)).